Here is a 400-residue protein sequence, read N- to C-terminus: E3 ubiquitin-protein ligase RNF149 (400 aa).

Positions 1-32 are cleaved as a signal peptide; sequence MAWRRREASVGARGVLALALLALALCVPGARG. N-linked (GlcNAc...) asparagine glycans are attached at residues N52 and N145. The region spanning 67–175 is the PA domain; that stretch reads SSPKEGAHGL…PKGREILELV (109 aa). The helical transmembrane segment at 201–221 threads the bilayer; that stretch reads VVFVAIAFITMMIISLAWLIF. Residues 269–310 form an RING-type; atypical zinc finger; the sequence is CAVCIENFKVKDIIRILPCKHIFHRICIDPWLLDHRTCPMCK. Residues 325–400 are disordered; the sequence is DVQEMPAPES…SDSRHGGPIS (76 aa). Phosphoserine is present on S345. A compositionally biased stretch (low complexity) spans 356–368; that stretch reads DSSPPSASPAESE. Positions 389–400 are enriched in basic and acidic residues; it reads GRSDSRHGGPIS.

It localises to the membrane. It carries out the reaction S-ubiquitinyl-[E2 ubiquitin-conjugating enzyme]-L-cysteine + [acceptor protein]-L-lysine = [E2 ubiquitin-conjugating enzyme]-L-cysteine + N(6)-ubiquitinyl-[acceptor protein]-L-lysine.. It participates in protein modification; protein ubiquitination. E3 ubiquitin-protein ligase. Ubiquitinates BRAF, inducing its proteasomal degradation. This is E3 ubiquitin-protein ligase RNF149 (RNF149) from Homo sapiens (Human).